Here is a 194-residue protein sequence, read N- to C-terminus: dTTP/UTP pyrophosphatase (194 aa).

D69 functions as the Proton acceptor in the catalytic mechanism.

Belongs to the Maf family. YhdE subfamily. Requires a divalent metal cation as cofactor.

It is found in the cytoplasm. It catalyses the reaction dTTP + H2O = dTMP + diphosphate + H(+). It carries out the reaction UTP + H2O = UMP + diphosphate + H(+). In terms of biological role, nucleoside triphosphate pyrophosphatase that hydrolyzes dTTP and UTP. May have a dual role in cell division arrest and in preventing the incorporation of modified nucleotides into cellular nucleic acids. In Symbiobacterium thermophilum (strain DSM 24528 / JCM 14929 / IAM 14863 / T), this protein is dTTP/UTP pyrophosphatase.